We begin with the raw amino-acid sequence, 71 residues long: Large ribosomal subunit protein uL29 (71 aa).

It belongs to the universal ribosomal protein uL29 family.

The polypeptide is Large ribosomal subunit protein uL29 (Roseiflexus sp. (strain RS-1)).